The sequence spans 728 residues: MSDRIDRDVINALIAGHFADPFSVLGMHKTTAGLEVRALLPDATDVWVIEPKTGRKLAKLECLDSRGFFSGVIPRRKNFFRYQLAVVWHGQQNLIDDPYRFGPLIQEMDAWLLSEGTHLRPYETLGAHADTMDGVTGTRFSVWAPNARRVSVVGQFNYWDGRRHPMRLRKESGIWELFIPGAHNGQLYKYEMIDANGNLRLKSDPYAFEAQMRPETASLICGLPEKVVQTEERKKANQFDAPISIYEVHLGSWRRHTDNNFWLSYRELADQLVPYAKWMGFTHLELLPLNEHPFDGSWGYQPTGLYAPTRRFGTRDDFRYFIDAAHAAGLNVILDWVPGHFPTDDFALAEFDGTNLYEHSDPREGYHQDWNTLIYNYGRREVSNFLVGNALYWIERFGIDALRVDAVASMIYRDYSRKEGEWIPNEFGGRENLEAIEFLRNTNRILGEQVSGAVTMAEESTDFPGVSRPQDMGGLGFWYKWNLGWMHDTLDYMKLDPIYRQYHHDKLTFGMLYNYTENFVLPLSHDEVVHGKKSILDRMPGDAWQKFANLRAYYGWMWAFPGKKLLFMGNEFAQGREWNHDASLDWHLLEGGDNWHHGVQRLVRDLNLTYRHHKAMHELDFDPYGFEWLVVDDKERSVLIFVRRDKEGNEIIVASNFTPVPRHDYRFGINQPGKWREILNTDSMHYHGSNAGNGGTVHSDEIASHGRQHSLSLTLPPLATIWLVREAE.

Residue D405 is the Nucleophile of the active site. E458 (proton donor) is an active-site residue.

This sequence belongs to the glycosyl hydrolase 13 family. GlgB subfamily. In terms of assembly, monomer.

The enzyme catalyses Transfers a segment of a (1-&gt;4)-alpha-D-glucan chain to a primary hydroxy group in a similar glucan chain.. It functions in the pathway glycan biosynthesis; glycogen biosynthesis. Catalyzes the formation of the alpha-1,6-glucosidic linkages in glycogen by scission of a 1,4-alpha-linked oligosaccharide from growing alpha-1,4-glucan chains and the subsequent attachment of the oligosaccharide to the alpha-1,6 position. This Escherichia coli O157:H7 protein is 1,4-alpha-glucan branching enzyme GlgB.